A 336-amino-acid polypeptide reads, in one-letter code: Dihydroorotate dehydrogenase (quinone) (336 aa).

Residues 62–66 (AGLDK) and T86 each bind FMN. A substrate-binding site is contributed by K66. 111 to 115 (NRMGF) provides a ligand contact to substrate. FMN is bound by residues N139 and N172. N172 lines the substrate pocket. S175 functions as the Nucleophile in the catalytic mechanism. N177 is a substrate binding site. FMN-binding residues include K217 and T245. 246 to 247 (NT) contacts substrate. Residues G268, G297, and 318-319 (YS) each bind FMN.

This sequence belongs to the dihydroorotate dehydrogenase family. Type 2 subfamily. As to quaternary structure, monomer. The cofactor is FMN.

It localises to the cell membrane. It carries out the reaction (S)-dihydroorotate + a quinone = orotate + a quinol. Its pathway is pyrimidine metabolism; UMP biosynthesis via de novo pathway; orotate from (S)-dihydroorotate (quinone route): step 1/1. Its function is as follows. Catalyzes the conversion of dihydroorotate to orotate with quinone as electron acceptor. The polypeptide is Dihydroorotate dehydrogenase (quinone) (Pectobacterium atrosepticum (strain SCRI 1043 / ATCC BAA-672) (Erwinia carotovora subsp. atroseptica)).